The chain runs to 81 residues: Translational regulator CsrA (81 aa).

This sequence belongs to the CsrA/RsmA family. As to quaternary structure, homodimer; the beta-strands of each monomer intercalate to form a hydrophobic core, while the alpha-helices form wings that extend away from the core.

The protein resides in the cytoplasm. Functionally, a translational regulator that binds mRNA to regulate translation initiation and/or mRNA stability. Usually binds in the 5'-UTR at or near the Shine-Dalgarno sequence preventing ribosome-binding, thus repressing translation. Its main target seems to be the major flagellin gene, while its function is anatagonized by FliW. This Halothermothrix orenii (strain H 168 / OCM 544 / DSM 9562) protein is Translational regulator CsrA.